The sequence spans 456 residues: tRNA-2-methylthio-N(6)-dimethylallyladenosine synthase (456 aa).

Positions Met1–Gln116 constitute an MTTase N-terminal domain. Residues Cys10, Cys46, Cys79, Cys162, Cys166, and Cys169 each contribute to the [4Fe-4S] cluster site. The region spanning Ser148 to Lys384 is the Radical SAM core domain. A TRAM domain is found at Arg387 to Gln452.

Belongs to the methylthiotransferase family. MiaB subfamily. Monomer. [4Fe-4S] cluster is required as a cofactor.

It is found in the cytoplasm. The enzyme catalyses N(6)-dimethylallyladenosine(37) in tRNA + (sulfur carrier)-SH + AH2 + 2 S-adenosyl-L-methionine = 2-methylsulfanyl-N(6)-dimethylallyladenosine(37) in tRNA + (sulfur carrier)-H + 5'-deoxyadenosine + L-methionine + A + S-adenosyl-L-homocysteine + 2 H(+). Its function is as follows. Catalyzes the methylthiolation of N6-(dimethylallyl)adenosine (i(6)A), leading to the formation of 2-methylthio-N6-(dimethylallyl)adenosine (ms(2)i(6)A) at position 37 in tRNAs that read codons beginning with uridine. In Treponema pallidum (strain Nichols), this protein is tRNA-2-methylthio-N(6)-dimethylallyladenosine synthase.